We begin with the raw amino-acid sequence, 183 residues long: Gamma-crystallin N-B (183 aa).

Beta/gamma crystallin 'Greek key' domains are found at residues 6–46 (GKIC…RVES), 47–89 (GAWI…RPIR), 95–136 (YRME…RVFG), and 138–180 (GAWV…RRIV).

This sequence belongs to the beta/gamma-crystallin family. As to quaternary structure, monomer.

Its function is as follows. Crystallins are the dominant structural components of the vertebrate eye lens. This Danio rerio (Zebrafish) protein is Gamma-crystallin N-B (crygnb).